We begin with the raw amino-acid sequence, 286 residues long: Formamidopyrimidine-DNA glycosylase (286 aa).

Catalysis depends on P2, which acts as the Schiff-base intermediate with DNA. Residue E3 is the Proton donor of the active site. The Proton donor; for beta-elimination activity role is filled by K61. Residues H96, R115, and K161 each coordinate DNA. Residues 247-281 (EAYGREGEPCRRCGRAMRREAFMNRSSYFCPSCQR) form an FPG-type zinc finger. The active-site Proton donor; for delta-elimination activity is the R271.

It belongs to the FPG family. In terms of assembly, monomer. Requires Zn(2+) as cofactor.

The catalysed reaction is Hydrolysis of DNA containing ring-opened 7-methylguanine residues, releasing 2,6-diamino-4-hydroxy-5-(N-methyl)formamidopyrimidine.. It carries out the reaction 2'-deoxyribonucleotide-(2'-deoxyribose 5'-phosphate)-2'-deoxyribonucleotide-DNA = a 3'-end 2'-deoxyribonucleotide-(2,3-dehydro-2,3-deoxyribose 5'-phosphate)-DNA + a 5'-end 5'-phospho-2'-deoxyribonucleoside-DNA + H(+). In terms of biological role, involved in base excision repair of DNA damaged by oxidation or by mutagenic agents. Acts as a DNA glycosylase that recognizes and removes damaged bases. Has a preference for oxidized purines, such as 7,8-dihydro-8-oxoguanine (8-oxoG). Has AP (apurinic/apyrimidinic) lyase activity and introduces nicks in the DNA strand. Cleaves the DNA backbone by beta-delta elimination to generate a single-strand break at the site of the removed base with both 3'- and 5'-phosphates. This is Formamidopyrimidine-DNA glycosylase from Mycobacteroides abscessus (strain ATCC 19977 / DSM 44196 / CCUG 20993 / CIP 104536 / JCM 13569 / NCTC 13031 / TMC 1543 / L948) (Mycobacterium abscessus).